Here is an 88-residue protein sequence, read N- to C-terminus: ATP synthase subunit 9, mitochondrial (88 aa).

Helical transmembrane passes span 30–50 (IGLT…ILAV) and 66–86 (LGFA…FLIL).

This sequence belongs to the ATPase C chain family. F-type ATPases have 2 components, CF(1) - the catalytic core - and CF(0) - the membrane proton channel. CF(1) has five subunits: alpha(3), beta(3), gamma(1), delta(1), epsilon(1). CF(0) has three main subunits: a, b and c.

It is found in the mitochondrion membrane. Its function is as follows. Mitochondrial membrane ATP synthase (F(1)F(0) ATP synthase or Complex V) produces ATP from ADP in the presence of a proton gradient across the membrane which is generated by electron transport complexes of the respiratory chain. F-type ATPases consist of two structural domains, F(1) - containing the extramembraneous catalytic core and F(0) - containing the membrane proton channel, linked together by a central stalk and a peripheral stalk. During catalysis, ATP synthesis in the catalytic domain of F(1) is coupled via a rotary mechanism of the central stalk subunits to proton translocation. Part of the complex F(0) domain. A homomeric c-ring of probably 10 subunits is part of the complex rotary element. The chain is ATP synthase subunit 9, mitochondrial (atp9) from Dictyostelium citrinum (Slime mold).